The chain runs to 229 residues: DNA repair protein RecO (229 aa).

The protein belongs to the RecO family.

Functionally, involved in DNA repair and RecF pathway recombination. This is DNA repair protein RecO from Legionella pneumophila (strain Paris).